The sequence spans 305 residues: 2-methoxy-6-polyprenyl-1,4-benzoquinol methylase, mitochondrial (305 aa).

A mitochondrion-targeting transit peptide spans 1–34 (MSRLRAPVAKFLADGLKGIRSTALAGSRLSNCRY). S-adenosyl-L-methionine-binding positions include threonine 117, aspartate 143, and 173-174 (NA).

Belongs to the class I-like SAM-binding methyltransferase superfamily. MenG/UbiE family. Component of a multi-subunit COQ enzyme complex, composed of at least COQ3, COQ4, COQ5, COQ6, COQ7 and COQ9.

Its subcellular location is the mitochondrion inner membrane. The enzyme catalyses 2-methoxy-6-(all-trans-decaprenyl)benzene-1,4-diol + S-adenosyl-L-methionine = 5-methoxy-2-methyl-3-(all-trans-decaprenyl)benzene-1,4-diol + S-adenosyl-L-homocysteine + H(+). It functions in the pathway cofactor biosynthesis; ubiquinone biosynthesis. Methyltransferase required for the conversion of 2-decaprenyl-6-methoxy-1,4-benzoquinol (DDMQH2) to 2-decaprenyl-3-methyl-6-methoxy-1,4-benzoquinol (DMQH2). The chain is 2-methoxy-6-polyprenyl-1,4-benzoquinol methylase, mitochondrial from Schizosaccharomyces pombe (strain 972 / ATCC 24843) (Fission yeast).